Here is a 201-residue protein sequence, read N- to C-terminus: Prostamide/prostaglandin F synthase (201 aa).

Belongs to the peroxiredoxin-like PRXL2 family. Prostamide/prostaglandin F synthase subfamily.

Its subcellular location is the cytoplasm. The protein localises to the cytosol. It catalyses the reaction prostaglandin H2 + [thioredoxin]-dithiol = prostaglandin F2alpha + [thioredoxin]-disulfide. It carries out the reaction prostamide F2alpha + [thioredoxin]-disulfide = prostamide H2 + [thioredoxin]-dithiol. Catalyzes the reduction of prostaglandin-ethanolamide H(2) (prostamide H(2)) to prostamide F(2alpha) with NADPH as proton donor. Also able to reduce prostaglandin H(2) to prostaglandin F(2alpha). This Xenopus laevis (African clawed frog) protein is Prostamide/prostaglandin F synthase (prxl2b).